We begin with the raw amino-acid sequence, 735 residues long: 5-methyltetrahydropteroyltriglutamate--homocysteine methyltransferase (735 aa).

5-methyltetrahydropteroyltri-L-glutamate-binding positions include 15 to 18 (REFK) and lysine 104. L-homocysteine-binding positions include 409 to 411 (IGS) and glutamate 462. Residues 409 to 411 (IGS) and glutamate 462 each bind L-methionine. Residues 493–494 (RC) and tryptophan 539 each bind 5-methyltetrahydropteroyltri-L-glutamate. L-homocysteine is bound at residue aspartate 577. Aspartate 577 lines the L-methionine pocket. 5-methyltetrahydropteroyltri-L-glutamate is bound at residue glutamate 583. Histidine 618, cysteine 620, and glutamate 642 together coordinate Zn(2+). The active-site Proton donor is histidine 672. Residue cysteine 704 coordinates Zn(2+).

It belongs to the vitamin-B12 independent methionine synthase family. Requires Zn(2+) as cofactor.

The catalysed reaction is 5-methyltetrahydropteroyltri-L-glutamate + L-homocysteine = tetrahydropteroyltri-L-glutamate + L-methionine. The protein operates within amino-acid biosynthesis; L-methionine biosynthesis via de novo pathway; L-methionine from L-homocysteine (MetE route): step 1/1. Its function is as follows. Catalyzes the transfer of a methyl group from 5-methyltetrahydrofolate to homocysteine resulting in methionine formation. The chain is 5-methyltetrahydropteroyltriglutamate--homocysteine methyltransferase from Thermotoga petrophila (strain ATCC BAA-488 / DSM 13995 / JCM 10881 / RKU-1).